A 152-amino-acid chain; its full sequence is Protein-export protein SecB (152 aa).

This sequence belongs to the SecB family. Homotetramer, a dimer of dimers. One homotetramer interacts with 1 SecA dimer.

The protein localises to the cytoplasm. Its function is as follows. One of the proteins required for the normal export of preproteins out of the cell cytoplasm. It is a molecular chaperone that binds to a subset of precursor proteins, maintaining them in a translocation-competent state. It also specifically binds to its receptor SecA. This Rickettsia rickettsii (strain Iowa) protein is Protein-export protein SecB.